The following is a 118-amino-acid chain: V-type proton ATPase subunit G 2 (118 aa).

The disordered stretch occupies residues 23-91; the sequence is ADARKRKARR…QGMQSSQQRN (69 aa). Positions 35 to 55 are enriched in basic and acidic residues; it reads QAKEEAQMEVEQYRREREQEF. Polar residues-rich tracts occupy residues 56–69 and 78–89; these read QSKQ…QGNL and RRQVQGMQSSQQ.

Belongs to the V-ATPase G subunit family. In terms of assembly, V-ATPase is a heteromultimeric enzyme made up of two complexes: the ATP-hydrolytic V1 complex and the proton translocation V0 complex. The V1 complex consists of three catalytic AB heterodimers that form a heterohexamer, three peripheral stalks each consisting of EG heterodimers, one central rotor including subunits D and F, and the regulatory subunits C and H. The proton translocation complex V0 consists of the proton transport subunit a, a ring of proteolipid subunits c9c'', rotary subunit d, subunits e and f, and the accessory subunits ATP6AP1/Ac45 and ATP6AP2/PRR.

It localises to the melanosome. It is found in the cytoplasmic vesicle. The protein localises to the clathrin-coated vesicle membrane. In terms of biological role, subunit of the V1 complex of vacuolar(H+)-ATPase (V-ATPase), a multisubunit enzyme composed of a peripheral complex (V1) that hydrolyzes ATP and a membrane integral complex (V0) that translocates protons. V-ATPase is responsible for acidifying and maintaining the pH of intracellular compartments and in some cell types, is targeted to the plasma membrane, where it is responsible for acidifying the extracellular environment. The protein is V-type proton ATPase subunit G 2 (Atp6v1g2) of Mus musculus (Mouse).